Here is a 372-residue protein sequence, read N- to C-terminus: Lipoyl synthase, mitochondrial (372 aa).

A mitochondrion-targeting transit peptide spans 1–27; it reads MSLRCGGAVRTVGPRVFGRYVFSPVRE. 7 residues coordinate [4Fe-4S] cluster: Cys106, Cys111, Cys117, Cys137, Cys141, Cys144, and Ser352. Residues 122-341 enclose the Radical SAM core domain; sequence EYATATATIM…EKVGNELGFH (220 aa).

Belongs to the radical SAM superfamily. Lipoyl synthase family. [4Fe-4S] cluster serves as cofactor.

The protein resides in the mitochondrion. It catalyses the reaction [[Fe-S] cluster scaffold protein carrying a second [4Fe-4S](2+) cluster] + N(6)-octanoyl-L-lysyl-[protein] + 2 oxidized [2Fe-2S]-[ferredoxin] + 2 S-adenosyl-L-methionine + 4 H(+) = [[Fe-S] cluster scaffold protein] + N(6)-[(R)-dihydrolipoyl]-L-lysyl-[protein] + 4 Fe(3+) + 2 hydrogen sulfide + 2 5'-deoxyadenosine + 2 L-methionine + 2 reduced [2Fe-2S]-[ferredoxin]. It participates in protein modification; protein lipoylation via endogenous pathway; protein N(6)-(lipoyl)lysine from octanoyl-[acyl-carrier-protein]: step 2/2. Functionally, catalyzes the radical-mediated insertion of two sulfur atoms into the C-6 and C-8 positions of the octanoyl moiety bound to the lipoyl domains of lipoate-dependent enzymes, thereby converting the octanoylated domains into lipoylated derivatives. The chain is Lipoyl synthase, mitochondrial from Bos taurus (Bovine).